Here is a 110-residue protein sequence, read N- to C-terminus: Thiosulfate sulfurtransferase GlpE (110 aa).

The 89-residue stretch at 17–105 folds into the Rhodanese domain; that stretch reads KKEGAVVVDI…WRATYPAETA (89 aa). The Cysteine persulfide intermediate role is filled by Cys-65.

This sequence belongs to the GlpE family.

It is found in the cytoplasm. It catalyses the reaction thiosulfate + hydrogen cyanide = thiocyanate + sulfite + 2 H(+). The enzyme catalyses thiosulfate + [thioredoxin]-dithiol = [thioredoxin]-disulfide + hydrogen sulfide + sulfite + 2 H(+). In terms of biological role, transferase that catalyzes the transfer of sulfur from thiosulfate to thiophilic acceptors such as cyanide or dithiols. May function in a CysM-independent thiosulfate assimilation pathway by catalyzing the conversion of thiosulfate to sulfite, which can then be used for L-cysteine biosynthesis. The chain is Thiosulfate sulfurtransferase GlpE from Pseudomonas putida (strain ATCC 700007 / DSM 6899 / JCM 31910 / BCRC 17059 / LMG 24140 / F1).